We begin with the raw amino-acid sequence, 821 residues long: Leucine--tRNA ligase (821 aa).

The 'HIGH' region motif lies at Pro-44–His-54. The 'KMSKS' region motif lies at Lys-589–Ser-593. Lys-592 is an ATP binding site.

This sequence belongs to the class-I aminoacyl-tRNA synthetase family.

The protein localises to the cytoplasm. The catalysed reaction is tRNA(Leu) + L-leucine + ATP = L-leucyl-tRNA(Leu) + AMP + diphosphate. In Campylobacter concisus (strain 13826), this protein is Leucine--tRNA ligase.